We begin with the raw amino-acid sequence, 870 residues long: Disks large homolog 2 (870 aa).

2 S-palmitoyl cysteine lipidation sites follow: Cys5 and Cys7. At Ser28 the chain carries Phosphoserine. Phosphotyrosine is present on Tyr58. Ser65 carries the post-translational modification Phosphoserine. PDZ domains lie at 98 to 184 (EITL…VRRR) and 193 to 279 (EIKL…VGKP). A phosphoserine mark is found at Ser307, Ser328, Ser360, Ser365, Ser406, and Ser414. One can recognise a PDZ 3 domain in the interval 421–501 (KVVLHKGSTG…QTVTIIAQYQ (81 aa)). Position 505 is a phosphotyrosine (Tyr505). 5 positions are modified to phosphoserine: Ser528, Ser530, Ser553, Ser627, and Ser635. An SH3 domain is found at 536 to 606 (KRSLYVRAMF…PSKRRVERKE (71 aa)). In terms of domain architecture, Guanylate kinase-like spans 680 to 855 (TRPVIILGPM…IYNQCKLVIE (176 aa)). Phosphotyrosine occurs at positions 750 and 755.

Belongs to the MAGUK family. Interacts through its PDZ domains with NETO1. Interacts with NOS1/nNOS through second PDZ domain. Interacts with KCNJ2/Kir2.1 (via C-terminus) through one of its PDZ domains. Interacts with KCNJ4, Interacts with FRMPD4 (via C-terminus). Interacts with LRFN1, LRFN2 and LRFN4. Interacts with FASLG. Interacts with KCNJ4. Interacts with ADAM22. Interacts with DGKI (via PDZ-binding motif). Palmitoylation of isoform 1 is not required for targeting to postsynaptic density.

The protein localises to the cell membrane. Its subcellular location is the postsynaptic density. It localises to the synapse. It is found in the membrane. The protein resides in the cell projection. The protein localises to the axon. Its subcellular location is the perikaryon. Its function is as follows. Required for perception of chronic pain through NMDA receptor signaling. Regulates surface expression of NMDA receptors in dorsal horn neurons of the spinal cord. Interacts with the cytoplasmic tail of NMDA receptor subunits as well as inward rectifying potassium channels. Involved in regulation of synaptic stability at cholinergic synapses. Part of the postsynaptic protein scaffold of excitatory synapses. This chain is Disks large homolog 2 (DLG2), found in Homo sapiens (Human).